A 289-amino-acid polypeptide reads, in one-letter code: Rhodopsin (289 aa).

Topologically, residues 1 to 7 (YLVSPAA) are extracellular. Residues 8 to 32 (YAALGAYMFLLILVGFPVNFLTLYV) traverse the membrane as a helical segment. Residues 33-44 (TLDHKKLRTPLN) lie on the Cytoplasmic side of the membrane. A helical membrane pass occupies residues 45-67 (YILLNLAVADLFMVLGGFTTTMY). At 68 to 81 (TSMHGYFVLGRLGC) the chain is on the extracellular side. A disulfide bridge connects residues Cys81 and Cys158. A helical membrane pass occupies residues 82-104 (NLEGFFATLGGEIALWSLVVLAI). Positions 105-107 (ERW) match the 'Ionic lock' involved in activated form stabilization motif. Residues 105 to 123 (ERWIVVCKPISNFRFTEDH) lie on the Cytoplasmic side of the membrane. Residues 124–144 (AIMGLAFSWVMALTCAVPPLV) form a helical membrane-spanning segment. The Extracellular segment spans residues 145–173 (GWSRYIPEGMQCSCGVDYYTRAEGFNTES). A helical transmembrane segment spans residues 174 to 195 (FVLYMFTVHFLIPLSVIFFCYG). The Cytoplasmic segment spans residues 196 to 223 (RLLCAVKEAAAAQQESETTQRAEKEVSR). The helical transmembrane segment at 224–245 (MVVLMVIGFLVCWLPYASVAWW) threads the bilayer. Residues 246 to 257 (IFCNQGSEFGPI) are Extracellular-facing. Residues 258–279 (FMTLPAFFAKTSAIYNPLIYIC) traverse the membrane as a helical segment. Lys267 is modified (N6-(retinylidene)lysine). Residues 280 to 289 (MNKQFRHCMI) are Cytoplasmic-facing.

This sequence belongs to the G-protein coupled receptor 1 family. Opsin subfamily. Phosphorylated on some or all of the serine and threonine residues present in the C-terminal region. Post-translationally, contains one covalently linked retinal chromophore.

Its subcellular location is the membrane. It localises to the cell projection. The protein localises to the cilium. It is found in the photoreceptor outer segment. Its function is as follows. Photoreceptor required for image-forming vision at low light intensity. While most salt water fish species use retinal as chromophore, most freshwater fish use 3-dehydroretinal, or a mixture of retinal and 3-dehydroretinal. Light-induced isomerization of 11-cis to all-trans retinal triggers a conformational change that activates signaling via G-proteins. Subsequent receptor phosphorylation mediates displacement of the bound G-protein alpha subunit by arrestin and terminates signaling. In Procottus jeittelesii (Red sculpin), this protein is Rhodopsin (rho).